A 455-amino-acid polypeptide reads, in one-letter code: Phosphoglucosamine mutase (455 aa).

Serine 104 acts as the Phosphoserine intermediate in catalysis. Mg(2+) is bound by residues serine 104, aspartate 253, aspartate 255, and aspartate 257. Serine 104 is modified (phosphoserine).

This sequence belongs to the phosphohexose mutase family. It depends on Mg(2+) as a cofactor. Post-translationally, activated by phosphorylation.

It catalyses the reaction alpha-D-glucosamine 1-phosphate = D-glucosamine 6-phosphate. Functionally, catalyzes the conversion of glucosamine-6-phosphate to glucosamine-1-phosphate. The chain is Phosphoglucosamine mutase from Psychrobacter arcticus (strain DSM 17307 / VKM B-2377 / 273-4).